Here is a 358-residue protein sequence, read N- to C-terminus: Chorismate synthase (358 aa).

The NADP(+) site is built by Arg46 and Arg52. Residues 123-125 (RSS), 239-240 (NA), Gly283, 298-302 (KSVAT), and Arg324 each bind FMN.

Belongs to the chorismate synthase family. Homotetramer. The cofactor is FMNH2.

It catalyses the reaction 5-O-(1-carboxyvinyl)-3-phosphoshikimate = chorismate + phosphate. The protein operates within metabolic intermediate biosynthesis; chorismate biosynthesis; chorismate from D-erythrose 4-phosphate and phosphoenolpyruvate: step 7/7. In terms of biological role, catalyzes the anti-1,4-elimination of the C-3 phosphate and the C-6 proR hydrogen from 5-enolpyruvylshikimate-3-phosphate (EPSP) to yield chorismate, which is the branch point compound that serves as the starting substrate for the three terminal pathways of aromatic amino acid biosynthesis. This reaction introduces a second double bond into the aromatic ring system. This is Chorismate synthase from Parabacteroides distasonis (strain ATCC 8503 / DSM 20701 / CIP 104284 / JCM 5825 / NCTC 11152).